An 880-amino-acid chain; its full sequence is Alanine--tRNA ligase (880 aa).

Positions 566, 570, 668, and 672 each coordinate Zn(2+).

It belongs to the class-II aminoacyl-tRNA synthetase family. Zn(2+) serves as cofactor.

Its subcellular location is the cytoplasm. The enzyme catalyses tRNA(Ala) + L-alanine + ATP = L-alanyl-tRNA(Ala) + AMP + diphosphate. Its function is as follows. Catalyzes the attachment of alanine to tRNA(Ala) in a two-step reaction: alanine is first activated by ATP to form Ala-AMP and then transferred to the acceptor end of tRNA(Ala). Also edits incorrectly charged Ser-tRNA(Ala) and Gly-tRNA(Ala) via its editing domain. This Nostoc punctiforme (strain ATCC 29133 / PCC 73102) protein is Alanine--tRNA ligase.